Consider the following 755-residue polypeptide: 1,4-alpha-glucan branching enzyme GlgB (755 aa).

D435 serves as the catalytic Nucleophile. Residue E488 is the Proton donor of the active site.

This sequence belongs to the glycosyl hydrolase 13 family. GlgB subfamily. As to quaternary structure, monomer.

It carries out the reaction Transfers a segment of a (1-&gt;4)-alpha-D-glucan chain to a primary hydroxy group in a similar glucan chain.. It participates in glycan biosynthesis; glycogen biosynthesis. In terms of biological role, catalyzes the formation of the alpha-1,6-glucosidic linkages in glycogen by scission of a 1,4-alpha-linked oligosaccharide from growing alpha-1,4-glucan chains and the subsequent attachment of the oligosaccharide to the alpha-1,6 position. This chain is 1,4-alpha-glucan branching enzyme GlgB, found in Vibrio parahaemolyticus serotype O3:K6 (strain RIMD 2210633).